A 596-amino-acid chain; its full sequence is Bromodomain-containing protein 9 (596 aa).

Positions 1 to 10 (MGKKHKKHKS) are enriched in basic residues. Disordered stretches follow at residues 1 to 31 (MGKKHKKHKSEWRSYDAGELGSPGDQSQYYV) and 49 to 119 (EVTE…SEGE). Positions 61–73 (SFYEDRSDHERER) are enriched in basic and acidic residues. Residues 74–84 (HKEKKKKKKKK) are compositionally biased toward basic residues. Positions 85-98 (SEKEKDKYLDEDER) are enriched in basic and acidic residues. Positions 99–109 (RRRKEEKKRKR) are enriched in basic residues. The Bromo domain occupies 148–252 (NESTPLQQLL…HTGFKMMSKQ (105 aa)). The histone H4K5ac H4K8ac and histone H4K5bu H4K8bu binding stretch occupies residues 226 to 228 (TYN). Residues 537–547 (DFHDVHNDRGG) are compositionally biased toward basic and acidic residues. The segment at 537–596 (DFHDVHNDRGGSRPSSSSSVSNNSERDHHLGSPSRISVGEQQDIHDPYEFLQSPETENQN) is disordered. The segment covering 548 to 559 (SRPSSSSSVSNN) has biased composition (low complexity).

Binds acetylated histones H3 and H4. Binds butyrylated histone H4.

The protein localises to the nucleus. Plays a role in chromatin remodeling and regulation of transcription. Acts as a chromatin reader that recognizes and binds acylated histones: binds histones that are acetylated and/or butyrylated. This is Bromodomain-containing protein 9 (brd9) from Xenopus tropicalis (Western clawed frog).